A 623-amino-acid polypeptide reads, in one-letter code: UvrABC system protein C (623 aa).

Residues 13–92 enclose the GIY-YIG domain; it reads DKPGVYIMKN…IKKYKPRYNI (80 aa). The UVR domain maps to 204-239; sequence NDIIRELKEEMEKASMNLDFEKAADLRDKMLAAQKV.

This sequence belongs to the UvrC family. In terms of assembly, interacts with UvrB in an incision complex.

The protein resides in the cytoplasm. Functionally, the UvrABC repair system catalyzes the recognition and processing of DNA lesions. UvrC both incises the 5' and 3' sides of the lesion. The N-terminal half is responsible for the 3' incision and the C-terminal half is responsible for the 5' incision. The protein is UvrABC system protein C of Clostridium acetobutylicum (strain ATCC 824 / DSM 792 / JCM 1419 / IAM 19013 / LMG 5710 / NBRC 13948 / NRRL B-527 / VKM B-1787 / 2291 / W).